The following is a 165-amino-acid chain: Glutamyl-tRNA(Gln) amidotransferase subunit F, mitochondrial (165 aa).

A mitochondrion-targeting transit peptide spans 1–19 (MKSILRSTTRNLITSSRRF).

This sequence belongs to the GatF family. As to quaternary structure, subunit of the heterotrimeric GatFAB amidotransferase (AdT) complex, composed of A, B and F subunits.

The protein localises to the mitochondrion inner membrane. The catalysed reaction is L-glutamyl-tRNA(Gln) + L-glutamine + ATP + H2O = L-glutaminyl-tRNA(Gln) + L-glutamate + ADP + phosphate + H(+). Its function is as follows. Allows the formation of correctly charged Gln-tRNA(Gln) through the transamidation of misacylated Glu-tRNA(Gln) in the mitochondria. The reaction takes place in the presence of glutamine and ATP through an activated gamma-phospho-Glu-tRNA(Gln). Required for proper protein synthesis within the mitochondrion. In Candida albicans (strain SC5314 / ATCC MYA-2876) (Yeast), this protein is Glutamyl-tRNA(Gln) amidotransferase subunit F, mitochondrial.